The following is a 404-amino-acid chain: Tryptophan synthase beta chain (404 aa).

Residue K94 is modified to N6-(pyridoxal phosphate)lysine.

The protein belongs to the TrpB family. In terms of assembly, tetramer of two alpha and two beta chains. It depends on pyridoxal 5'-phosphate as a cofactor.

The catalysed reaction is (1S,2R)-1-C-(indol-3-yl)glycerol 3-phosphate + L-serine = D-glyceraldehyde 3-phosphate + L-tryptophan + H2O. It participates in amino-acid biosynthesis; L-tryptophan biosynthesis; L-tryptophan from chorismate: step 5/5. In terms of biological role, the beta subunit is responsible for the synthesis of L-tryptophan from indole and L-serine. The polypeptide is Tryptophan synthase beta chain (Staphylococcus aureus (strain USA300)).